The primary structure comprises 119 residues: Protein TusC (119 aa).

This sequence belongs to the DsrF/TusC family. As to quaternary structure, heterohexamer, formed by a dimer of trimers. The hexameric TusBCD complex contains 2 copies each of TusB, TusC and TusD. The TusBCD complex interacts with TusE.

It is found in the cytoplasm. Its function is as follows. Part of a sulfur-relay system required for 2-thiolation of 5-methylaminomethyl-2-thiouridine (mnm(5)s(2)U) at tRNA wobble positions. In Buchnera aphidicola subsp. Acyrthosiphon pisum (strain 5A), this protein is Protein TusC.